The sequence spans 309 residues: Mitochondrial import receptor subunit TOM34 (309 aa).

A Phosphoserine modification is found at Ser8. 3 TPR repeats span residues Val9–Gln42, Ser51–Ser84, and Lys86–Val118. Phosphoserine is present on Ser160. Residues Leu161–Asp189 are disordered. Over residues Glu164–Thr178 the composition is skewed to basic and acidic residues. Phosphoserine is present on Ser186. 3 TPR repeats span residues Ala193 to Glu226, Ser227 to Asn260, and Lys262 to Asn294. Lys197 participates in a covalent cross-link: Glycyl lysine isopeptide (Lys-Gly) (interchain with G-Cter in SUMO2).

Belongs to the Tom34 family. In terms of assembly, interacts with HSP90A, VCP, ATP6V1D, KIAA0665, AMPK, and DMAP1 through its TPR repeat. As to expression, ubiquitous.

The protein resides in the cytoplasm. It localises to the mitochondrion outer membrane. Plays a role in the import of cytosolically synthesized preproteins into mitochondria. Binds the mature portion of precursor proteins. Interacts with cellular components, and possesses weak ATPase activity. May be a chaperone-like protein that helps to keep newly synthesized precursors in an unfolded import compatible state. The polypeptide is Mitochondrial import receptor subunit TOM34 (TOMM34) (Homo sapiens (Human)).